A 286-amino-acid polypeptide reads, in one-letter code: Shikimate dehydrogenase (NADP(+)) (286 aa).

Residues 22–24 and threonine 71 each bind shikimate; that span reads SRS. Lysine 75 serves as the catalytic Proton acceptor. Glutamate 87 provides a ligand contact to NADP(+). The shikimate site is built by asparagine 96 and aspartate 111. NADP(+) is bound by residues 136–140, 160–165, and isoleucine 225; these read GAGGA and NRTVER. Tyrosine 227 serves as a coordination point for shikimate. Glycine 248 is a binding site for NADP(+).

This sequence belongs to the shikimate dehydrogenase family. As to quaternary structure, homodimer.

It catalyses the reaction shikimate + NADP(+) = 3-dehydroshikimate + NADPH + H(+). The protein operates within metabolic intermediate biosynthesis; chorismate biosynthesis; chorismate from D-erythrose 4-phosphate and phosphoenolpyruvate: step 4/7. In terms of biological role, involved in the biosynthesis of the chorismate, which leads to the biosynthesis of aromatic amino acids. Catalyzes the reversible NADPH linked reduction of 3-dehydroshikimate (DHSA) to yield shikimate (SA). In Rhizobium rhizogenes (strain K84 / ATCC BAA-868) (Agrobacterium radiobacter), this protein is Shikimate dehydrogenase (NADP(+)).